We begin with the raw amino-acid sequence, 119 residues long: MAIITVTAQANEKNTRTVSTAKGDKKIISVPLFEKEKGSSVKVAYGSAFLPDFIQLGDTVTVSGRVQAKESGEYVNYNFVFPTVEKVFITNDNSSQSQAKQDLFGGSEPIEVNSEDLPF.

The segment at 96–119 (QSQAKQDLFGGSEPIEVNSEDLPF) is disordered.

The protein belongs to the skunalikevirus SSB protein family. In terms of assembly, homodimer; two homodimers can further weakly assemble into a homotetramer.

Its function is as follows. Binds ssDNA with nanomolar affinity but no sequence specificity. The protein is SSB protein of Lactococcus phage SK1 (Lactococcus lactis bacteriophage SK1).